A 524-amino-acid polypeptide reads, in one-letter code: Nif-specific regulatory protein (524 aa).

Residues 1–182 form an a domain region; it reads MIHKSDSDTT…AQTIRLMILP (182 aa). Residues 35–176 enclose the GAF domain; sequence EASKTLQEVL…TVANLIAQTI (142 aa). A Sigma-54 factor interaction domain is found at 212–481; the sequence is MVGKSPAMRQ…DGWLDNSLDE (270 aa). ATP contacts are provided by residues 240–247 and 303–312; these read GESGTGKE and ADGGTLFLDE. The segment at 482-524 is C-terminal DNA-binding domain; it reads RQRLIAALEKAGWVQAKAARLLGMTPRQVAYRIQIMDITMPRL. A DNA-binding region (H-T-H motif) is located at residues 496-515; that stretch reads QAKAARLLGMTPRQVAYRIQ.

Interacts with sigma-54.

Its function is as follows. Required for activation of most nif operons, which are directly involved in nitrogen fixation. This Klebsiella pneumoniae protein is Nif-specific regulatory protein (nifA).